Consider the following 232-residue polypeptide: Lipoprotein-releasing system ATP-binding protein LolD 1 (232 aa).

Residues 11-231 form the ABC transporter domain; it reads VYLHDVKRQY…SIQDGLVVEL (221 aa). 47-54 contributes to the ATP binding site; sequence APSGAGKS.

The protein belongs to the ABC transporter superfamily. Lipoprotein translocase (TC 3.A.1.125) family. The complex is composed of two ATP-binding proteins (LolD) and two transmembrane proteins (LolC and LolE).

Its subcellular location is the cell inner membrane. Functionally, part of the ABC transporter complex LolCDE involved in the translocation of mature outer membrane-directed lipoproteins, from the inner membrane to the periplasmic chaperone, LolA. Responsible for the formation of the LolA-lipoprotein complex in an ATP-dependent manner. This is Lipoprotein-releasing system ATP-binding protein LolD 1 from Rhodopseudomonas palustris (strain BisB18).